Reading from the N-terminus, the 158-residue chain is 6,7-dimethyl-8-ribityllumazine synthase (158 aa).

5-amino-6-(D-ribitylamino)uracil is bound by residues W27, 58–60, and 81–83; these read SFE and VII. 86-87 lines the (2S)-2-hydroxy-3-oxobutyl phosphate pocket; it reads GT. The active-site Proton donor is H89. F114 contacts 5-amino-6-(D-ribitylamino)uracil. R128 contributes to the (2S)-2-hydroxy-3-oxobutyl phosphate binding site.

Belongs to the DMRL synthase family.

It carries out the reaction (2S)-2-hydroxy-3-oxobutyl phosphate + 5-amino-6-(D-ribitylamino)uracil = 6,7-dimethyl-8-(1-D-ribityl)lumazine + phosphate + 2 H2O + H(+). It functions in the pathway cofactor biosynthesis; riboflavin biosynthesis; riboflavin from 2-hydroxy-3-oxobutyl phosphate and 5-amino-6-(D-ribitylamino)uracil: step 1/2. Catalyzes the formation of 6,7-dimethyl-8-ribityllumazine by condensation of 5-amino-6-(D-ribitylamino)uracil with 3,4-dihydroxy-2-butanone 4-phosphate. This is the penultimate step in the biosynthesis of riboflavin. The polypeptide is 6,7-dimethyl-8-ribityllumazine synthase (Leifsonia xyli subsp. xyli (strain CTCB07)).